Reading from the N-terminus, the 159-residue chain is NAD(P)H-quinone oxidoreductase subunit J, chloroplastic (159 aa).

Belongs to the complex I 30 kDa subunit family. NDH is composed of at least 16 different subunits, 5 of which are encoded in the nucleus.

The protein resides in the plastid. It localises to the chloroplast thylakoid membrane. It catalyses the reaction a plastoquinone + NADH + (n+1) H(+)(in) = a plastoquinol + NAD(+) + n H(+)(out). The enzyme catalyses a plastoquinone + NADPH + (n+1) H(+)(in) = a plastoquinol + NADP(+) + n H(+)(out). Functionally, NDH shuttles electrons from NAD(P)H:plastoquinone, via FMN and iron-sulfur (Fe-S) centers, to quinones in the photosynthetic chain and possibly in a chloroplast respiratory chain. The immediate electron acceptor for the enzyme in this species is believed to be plastoquinone. Couples the redox reaction to proton translocation, and thus conserves the redox energy in a proton gradient. In Agrostis stolonifera (Creeping bentgrass), this protein is NAD(P)H-quinone oxidoreductase subunit J, chloroplastic.